A 178-amino-acid polypeptide reads, in one-letter code: Ras-like protein (178 aa).

1-6 (GGVGKS) is a GTP binding site. Positions 21–29 (YDPTIEDSY) match the Effector region motif. GTP contacts are provided by residues 46 to 50 (DTAGQ) and 105 to 108 (NKCD). C175 is subject to Cysteine methyl ester. A lipid anchor (S-geranylgeranyl cysteine) is attached at C175. Positions 176 to 178 (SIL) are cleaved as a propeptide — removed in mature form.

The protein belongs to the small GTPase superfamily. Ras family.

The protein resides in the cell membrane. It carries out the reaction GTP + H2O = GDP + phosphate + H(+). Alternates between an inactive form bound to GDP and an active form bound to GTP. Activated by a guanine nucleotide-exchange factor (GEF) and inactivated by a GTPase-activating protein (GAP). Its function is as follows. Ras proteins bind GDP/GTP and possess intrinsic GTPase activity. In Artemia salina (Brine shrimp), this protein is Ras-like protein.